Reading from the N-terminus, the 150-residue chain is Monooxygenase dmxR10 (150 aa).

Belongs to the avfA family.

Its pathway is secondary metabolite biosynthesis. Monooxygenase; part of the gene cluster that mediates the biosynthesis of the dimeric xanthones cryptosporioptides. The pathway begins with the synthesis of atrochrysone thioester by the polyketide synthase dmx-nrPKS. The atrochrysone carboxyl ACP thioesterase dmxR1 then breaks the thioester bond and releases the atrochrysone carboxylic acid from dmx-nrPKS. Atrochrysone carboxylic acid is decarboxylated by the decarboxylase dmxR15, and oxidized by the anthrone oxygenase dmxR16 to yield emodin. Emodin is then reduced to emodin hydroquinone by the oxidoreductase dmxR7. A-ring reduction by the short chain dehydrogenase dmxR18, dehydration by the scytalone dehydratase-like protein dmxR17 and probable spontaneous re-oxidation, results in overall deoxygenation to chrysophanol. Baeyer-Villiger oxidation by the Baeyer-Villiger monooxygenase (BVMO) dmxR6 then yields monodictylactone in equilibrium with monodictyphenone. In the case of the cryptosporioptides biosynthesis, monodictylactone is reduced at C-12 to an alcohol (by the short chain dehydrogenases dmxR12 or dmxR8) and hydroxylated at C-5 by dmxR9, yielding the electron-rich aromatic which could eliminate H(2)O to form the ortho-quinonemethide, followed by tautomerisation to paraquinone and complete the formal reduction to produce the 10-methylgroup. Conjugate addition of C-4a-OH to the resulting paraquinone by the monooxygenase dmxR10 then gives cyclohexadienone, which is then reduced at C-5 by the short chain dehydrogenase dmxR3 to give the dihydroxanthone. The 6,7-epoxide in the cryptosporioptides could be introduced by the cytochrome P450 monooxygenase dmxL3. The highly reducing PKS dmxL2 manufactures butyrate, which is further carboxylated by dmxL1 to form ethylmalonate. It is not yet clear whether the carboxylation occurs while the butyrate is attached to the ACP of dmxL2, but this unusual fungal metabolite could then be esterified to O-5 by the O-acetyltransferase dmxR13. Finally, dimerization performed by dmxR5 gives the observed dimers cryptosporioptides A, B and C as the final products of the pathway. This Cryptosporiopsis sp. (strain 8999) protein is Monooxygenase dmxR10.